The sequence spans 401 residues: Argininosuccinate synthase (401 aa).

9–17 (AYSGGLDTS) is an ATP binding site. Tyr86 provides a ligand contact to L-citrulline. Gly116 serves as a coordination point for ATP. 3 residues coordinate L-aspartate: Thr118, Asn122, and Asp123. Position 122 (Asn122) interacts with L-citrulline. The L-citrulline site is built by Arg126, Ser174, Ser183, Glu259, and Tyr271.

Belongs to the argininosuccinate synthase family. Type 1 subfamily. Homotetramer.

It localises to the cytoplasm. It carries out the reaction L-citrulline + L-aspartate + ATP = 2-(N(omega)-L-arginino)succinate + AMP + diphosphate + H(+). It functions in the pathway amino-acid biosynthesis; L-arginine biosynthesis; L-arginine from L-ornithine and carbamoyl phosphate: step 2/3. The chain is Argininosuccinate synthase from Bacillus cereus (strain Q1).